The following is a 176-amino-acid chain: Pituitary adenylate cyclase-activating polypeptide (176 aa).

The signal sequence occupies residues 1–24; the sequence is MTMCSGARLALLVYGILMHSSVYG. Residues 25 to 80 constitute a propeptide that is removed on maturation; sequence SPAASGLRFPGIRPENEVYDEDGNPQQDFYDSESLGVGSPASALRDAYALYYPAEE. Residues 98 to 135 are disordered; that stretch reads QPSARRSPADAHGQGLGWDPGGSADDDSEPLSKRHSDG. An important for receptor binding region spans residues 150-158; sequence VKKYLAAVL. Leu-158 carries the post-translational modification Leucine amide. The residue at position 169 (Lys-169) is a Lysine amide. The propeptide occupies 173–176; that stretch reads IPYL.

It belongs to the glucagon family. As to quaternary structure, interacts with ADCYAP1R1 (via N-terminal extracellular domain); both PACAP27 and PACAP38 neuropeptides function as ligand for the ADCYAP1R1 receptor, which modulates the activity of downstream effectors. Interacts with VIPR1 and VIPR2; functions as ligand for VIPR1 and VIPR2 receptors, which modulate the activity of downstream effectors.

Its subcellular location is the secreted. In terms of biological role, PACAP is a neuropeptide involved in diverse array of physiological processes through activating the PACAP subfamily of class B1 G protein-coupled receptors: VIP receptor 1 (VIPR1), VIP receptor 2 (VIPR2), and PACAP type I receptor (ADCYAP1R1). Exerts neuroprotective and general cytoprotective effects due to anti-apoptotic, anti-inflammatory, and antioxidant actions. Promotes neuron projection development through the RAPGEF2/Rap1/B-Raf/ERK pathway. In chromaffin cells, induces long-lasting increase of intracellular calcium concentrations and neuroendocrine secretion. Involved in the control of glucose homeostasis, induces insulin secretion by pancreatic beta cells. PACAP exists in two bioactive forms from proteolysis of the same precursor protein, PACAP27 and PACAP38, which differ by eleven amino acid residues in the C-terminus. The polypeptide is Pituitary adenylate cyclase-activating polypeptide (ADCYAP1) (Bos taurus (Bovine)).